Here is a 194-residue protein sequence, read N- to C-terminus: Imidazoleglycerol-phosphate dehydratase (194 aa).

This sequence belongs to the imidazoleglycerol-phosphate dehydratase family.

The protein resides in the cytoplasm. The catalysed reaction is D-erythro-1-(imidazol-4-yl)glycerol 3-phosphate = 3-(imidazol-4-yl)-2-oxopropyl phosphate + H2O. It functions in the pathway amino-acid biosynthesis; L-histidine biosynthesis; L-histidine from 5-phospho-alpha-D-ribose 1-diphosphate: step 6/9. The chain is Imidazoleglycerol-phosphate dehydratase from Lactiplantibacillus plantarum (strain ATCC BAA-793 / NCIMB 8826 / WCFS1) (Lactobacillus plantarum).